A 36-amino-acid polypeptide reads, in one-letter code: Potassium channel toxin alpha-KTx 16.1 (36 aa).

Intrachain disulfides connect cysteine 7–cysteine 28, cysteine 13–cysteine 33, and cysteine 17–cysteine 35.

The protein belongs to the short scorpion toxin superfamily. Potassium channel inhibitor family. Alpha-KTx 16 subfamily. As to expression, expressed by the venom gland.

Its subcellular location is the secreted. Functionally, blocks calcium-activated potassium channels. This is Potassium channel toxin alpha-KTx 16.1 from Hottentotta tamulus (Eastern Indian scorpion).